The primary structure comprises 122 residues: Large ribosomal subunit protein uL14 (122 aa).

This sequence belongs to the universal ribosomal protein uL14 family. In terms of assembly, part of the 50S ribosomal subunit. Forms a cluster with proteins L3 and L19. In the 70S ribosome, L14 and L19 interact and together make contacts with the 16S rRNA in bridges B5 and B8.

Its function is as follows. Binds to 23S rRNA. Forms part of two intersubunit bridges in the 70S ribosome. The chain is Large ribosomal subunit protein uL14 from Chlamydia pneumoniae (Chlamydophila pneumoniae).